Reading from the N-terminus, the 346-residue chain is tRNA N6-adenosine threonylcarbamoyltransferase (346 aa).

A divalent metal cation-binding residues include His-120, His-124, and Tyr-141. Residues 141–145 (YVSGG), Asp-173, Gly-188, Glu-192, and Asn-277 contribute to the substrate site. Asp-305 is a binding site for a divalent metal cation.

Belongs to the KAE1 / TsaD family. As to quaternary structure, component of the EKC/KEOPS complex composed of at least BUD32, CGI121, GON7, KAE1 and PCC1; the whole complex dimerizes. Requires a divalent metal cation as cofactor.

It localises to the cytoplasm. The protein resides in the nucleus. The enzyme catalyses L-threonylcarbamoyladenylate + adenosine(37) in tRNA = N(6)-L-threonylcarbamoyladenosine(37) in tRNA + AMP + H(+). Component of the EKC/KEOPS complex that is required for the formation of a threonylcarbamoyl group on adenosine at position 37 (t(6)A37) in tRNAs that read codons beginning with adenine. The complex is probably involved in the transfer of the threonylcarbamoyl moiety of threonylcarbamoyl-AMP (TC-AMP) to the N6 group of A37. KAE1 likely plays a direct catalytic role in this reaction, but requires other protein(s) of the complex to fulfill this activity. The EKC/KEOPS complex also promotes both telomere uncapping and telomere elongation. The complex is required for efficient recruitment of transcriptional coactivators. The polypeptide is tRNA N6-adenosine threonylcarbamoyltransferase (Gibberella zeae (strain ATCC MYA-4620 / CBS 123657 / FGSC 9075 / NRRL 31084 / PH-1) (Wheat head blight fungus)).